Here is a 220-residue protein sequence, read N- to C-terminus: Probable GTP-binding protein EngB (220 aa).

The region spanning 41–219 (DRSEVCFAGR…RAEIAALAML (179 aa)) is the EngB-type G domain. Residues 49-56 (GRSNVGKS), 76-80 (GRTRE), 96-99 (DLPG), 164-167 (TKVD), and 197-200 (MTSA) each bind GTP. Mg(2+) contacts are provided by Ser56 and Thr78.

Belongs to the TRAFAC class TrmE-Era-EngA-EngB-Septin-like GTPase superfamily. EngB GTPase family. The cofactor is Mg(2+).

In terms of biological role, necessary for normal cell division and for the maintenance of normal septation. The chain is Probable GTP-binding protein EngB from Hyphomonas neptunium (strain ATCC 15444).